A 225-amino-acid chain; its full sequence is ATP-dependent dethiobiotin synthetase BioD (225 aa).

12-17 (GVGKTV) is a binding site for ATP. T16 provides a ligand contact to Mg(2+). K37 is a catalytic residue. Position 41 (T41) interacts with substrate. ATP contacts are provided by residues D49, 108-111 (EGAG), and 197-199 (PAG). Mg(2+) contacts are provided by D49 and E108.

This sequence belongs to the dethiobiotin synthetase family. Homodimer. The cofactor is Mg(2+).

The protein localises to the cytoplasm. The enzyme catalyses (7R,8S)-7,8-diammoniononanoate + CO2 + ATP = (4R,5S)-dethiobiotin + ADP + phosphate + 3 H(+). Its pathway is cofactor biosynthesis; biotin biosynthesis; biotin from 7,8-diaminononanoate: step 1/2. Catalyzes a mechanistically unusual reaction, the ATP-dependent insertion of CO2 between the N7 and N8 nitrogen atoms of 7,8-diaminopelargonic acid (DAPA, also called 7,8-diammoniononanoate) to form a ureido ring. This is ATP-dependent dethiobiotin synthetase BioD from Mycolicibacterium smegmatis (strain ATCC 700084 / mc(2)155) (Mycobacterium smegmatis).